The chain runs to 246 residues: AA9 family lytic polysaccharide monooxygenase D (246 aa).

The signal sequence occupies residues 1-19; sequence MHLLSLLFPVIALIPTVLS. Histidine 20 contacts Cu(2+). Cysteine 78 and cysteine 196 are joined by a disulfide. N-linked (GlcNAc...) asparagine glycans are attached at residues asparagine 86, asparagine 141, and asparagine 156. The O2 site is built by histidine 182 and glutamine 191. Position 193 (tyrosine 193) interacts with Cu(2+). Asparagine 235 is a glycosylation site (N-linked (GlcNAc...) asparagine).

This sequence belongs to the polysaccharide monooxygenase AA9 family. Requires Cu(2+) as cofactor.

It localises to the secreted. The catalysed reaction is [(1-&gt;4)-beta-D-glucosyl]n+m + reduced acceptor + O2 = 4-dehydro-beta-D-glucosyl-[(1-&gt;4)-beta-D-glucosyl]n-1 + [(1-&gt;4)-beta-D-glucosyl]m + acceptor + H2O.. In terms of biological role, lytic polysaccharide monooxygenase (LPMO) that depolymerizes crystalline and amorphous polysaccharides via the oxidation of scissile alpha- or beta-(1-4)-glycosidic bonds, yielding C1 and C4 oxidation products. Catalysis by LPMOs requires the reduction of the active-site copper from Cu(II) to Cu(I) by a reducing agent and H(2)O(2) or O(2) as a cosubstrate. The sequence is that of AA9 family lytic polysaccharide monooxygenase D from Botryotinia fuckeliana (strain B05.10) (Noble rot fungus).